The sequence spans 311 residues: Aspartate carbamoyltransferase catalytic subunit (311 aa).

Positions 55 and 56 each coordinate carbamoyl phosphate. Lys85 serves as a coordination point for L-aspartate. The carbamoyl phosphate site is built by Arg106, His135, and Gln138. Residues Arg168 and Arg230 each coordinate L-aspartate. Residues Leu268 and Pro269 each coordinate carbamoyl phosphate.

This sequence belongs to the aspartate/ornithine carbamoyltransferase superfamily. ATCase family. Heterododecamer (2C3:3R2) of six catalytic PyrB chains organized as two trimers (C3), and six regulatory PyrI chains organized as three dimers (R2).

It catalyses the reaction carbamoyl phosphate + L-aspartate = N-carbamoyl-L-aspartate + phosphate + H(+). The protein operates within pyrimidine metabolism; UMP biosynthesis via de novo pathway; (S)-dihydroorotate from bicarbonate: step 2/3. Catalyzes the condensation of carbamoyl phosphate and aspartate to form carbamoyl aspartate and inorganic phosphate, the committed step in the de novo pyrimidine nucleotide biosynthesis pathway. This chain is Aspartate carbamoyltransferase catalytic subunit, found in Yersinia pestis.